The sequence spans 180 residues: Magnetosome protein MamS (180 aa).

Over 1 to 21 (MDFRPDQVVARIRGAVEGALT) the chain is Cytoplasmic. The chain crosses the membrane as a helical span at residues 22–42 (AQSVLGIGGALVLILVVIALL). Residues 43-180 (PDRFTRGEGK…EGLALWMTVQ (138 aa)) lie on the Lumenal side of the membrane.

Belongs to the magnetosome MamS family.

It is found in the magnetosome membrane. Functionally, may play a role in magnetite crystal growth and size. This Magnetospirillum gryphiswaldense (strain DSM 6361 / JCM 21280 / NBRC 15271 / MSR-1) protein is Magnetosome protein MamS.